A 591-amino-acid chain; its full sequence is Vomeromodulin (591 aa).

The first 18 residues, 1–18, serve as a signal peptide directing secretion; the sequence is MWVLQALAIMLSIQAGTL. Residues 151–172 are disordered; it reads NEGNGDSSKPSSGSKATGGLGQ. N-linked (GlcNAc...) asparagine glycans are attached at residues N421 and N516.

Post-translationally, N-glycosylated. The N-glycans consist mainly of complex sialylated and fucosylated biantennary structures. As to expression, expressed in lung. Not detected in other tissues tested (at protein level).

It is found in the secreted. The sequence is that of Vomeromodulin from Mus musculus (Mouse).